The following is a 188-amino-acid chain: Elongation factor P (188 aa).

This sequence belongs to the elongation factor P family.

The protein resides in the cytoplasm. The protein operates within protein biosynthesis; polypeptide chain elongation. In terms of biological role, involved in peptide bond synthesis. Stimulates efficient translation and peptide-bond synthesis on native or reconstituted 70S ribosomes in vitro. Probably functions indirectly by altering the affinity of the ribosome for aminoacyl-tRNA, thus increasing their reactivity as acceptors for peptidyl transferase. This is Elongation factor P from Bifidobacterium longum (strain DJO10A).